The following is a 633-amino-acid chain: GTPase-GDP dissociation stimulator BEM4 (633 aa).

Interacts with CDC42; the interaction is direct. Interacts with RHO1; the interaction is direct. Interacts with RHO2. Interacts with RHO4. Interacts with CDC11.

It is found in the nucleus. The protein localises to the cytoplasm. Functionally, probably acts as a GEF (guanine nucleotide exchange factor) for the Rho family of small GTP-binding proteins (G proteins) that stimulates the dissociation of GDP to enable subsequent binding of GTP. May also chaperone the processing and/or trafficking of small GTPases independently of GEF activity. Involved in the control of polarized cell growth via CDC42-mediated signaling. Involved in the control of cell-wall organization via RHO1-mediated signaling. May also function via RHO2 and RHO4. The chain is GTPase-GDP dissociation stimulator BEM4 from Saccharomyces cerevisiae (strain ATCC 204508 / S288c) (Baker's yeast).